The sequence spans 213 residues: Uridine kinase (213 aa).

15–22 (GASASGKS) lines the ATP pocket.

Belongs to the uridine kinase family.

It is found in the cytoplasm. The catalysed reaction is uridine + ATP = UMP + ADP + H(+). The enzyme catalyses cytidine + ATP = CMP + ADP + H(+). It functions in the pathway pyrimidine metabolism; CTP biosynthesis via salvage pathway; CTP from cytidine: step 1/3. Its pathway is pyrimidine metabolism; UMP biosynthesis via salvage pathway; UMP from uridine: step 1/1. This chain is Uridine kinase, found in Salmonella paratyphi A (strain ATCC 9150 / SARB42).